Here is a 722-residue protein sequence, read N- to C-terminus: Glycine--tRNA ligase beta subunit (722 aa).

Belongs to the class-II aminoacyl-tRNA synthetase family. As to quaternary structure, tetramer of two alpha and two beta subunits.

It localises to the cytoplasm. It catalyses the reaction tRNA(Gly) + glycine + ATP = glycyl-tRNA(Gly) + AMP + diphosphate. In Synechocystis sp. (strain ATCC 27184 / PCC 6803 / Kazusa), this protein is Glycine--tRNA ligase beta subunit (glyS).